The chain runs to 330 residues: Sulfate/thiosulfate import ATP-binding protein CysA (330 aa).

Positions 3-237 (IEIRNINKQF…PASEFVYHFL (235 aa)) constitute an ABC transporter domain. An ATP-binding site is contributed by 35-42 (GPSGCGKT).

It belongs to the ABC transporter superfamily. Sulfate/tungstate importer (TC 3.A.1.6) family. In terms of assembly, the complex is composed of two ATP-binding proteins (CysA), two transmembrane proteins (CysT and CysW) and a solute-binding protein (CysP).

The protein resides in the cell inner membrane. The catalysed reaction is sulfate(out) + ATP + H2O = sulfate(in) + ADP + phosphate + H(+). It catalyses the reaction thiosulfate(out) + ATP + H2O = thiosulfate(in) + ADP + phosphate + H(+). Part of the ABC transporter complex CysAWTP involved in sulfate/thiosulfate import. Responsible for energy coupling to the transport system. This is Sulfate/thiosulfate import ATP-binding protein CysA from Pectobacterium atrosepticum (strain SCRI 1043 / ATCC BAA-672) (Erwinia carotovora subsp. atroseptica).